Here is a 119-residue protein sequence, read N- to C-terminus: Beta-2-microglobulin (119 aa).

Positions 1–20 (MARSVTVIFLVLVSLAVVLA) are cleaved as a signal peptide. An Ig-like C1-type domain is found at 25–114 (PQIQVYSRHP…VTLKEPKTVT (90 aa)). Cys-45 and Cys-100 are joined by a disulfide.

It belongs to the beta-2-microglobulin family. As to quaternary structure, heterodimer of an alpha chain and a beta chain. Beta-2-microglobulin is the beta-chain of major histocompatibility complex class I molecules. Forms a heterotrimer with MR1 and a metabolite antigen.

It is found in the secreted. In terms of biological role, component of the class I major histocompatibility complex (MHC). Involved in the presentation of peptide antigens to the immune system. In Rattus norvegicus (Rat), this protein is Beta-2-microglobulin (B2m).